A 226-amino-acid chain; its full sequence is Ribonuclease 3 (226 aa).

An RNase III domain is found at 6–128 (INRLQRKLGY…LIGGVFLDSD (123 aa)). Glu41 is a Mg(2+) binding site. Residue Asp45 is part of the active site. Mg(2+) contacts are provided by Asp114 and Glu117. Glu117 is an active-site residue. One can recognise a DRBM domain in the interval 155-225 (DPKTRLQEYL…AEQALKMLEL (71 aa)).

This sequence belongs to the ribonuclease III family. As to quaternary structure, homodimer. Mg(2+) serves as cofactor.

It is found in the cytoplasm. The enzyme catalyses Endonucleolytic cleavage to 5'-phosphomonoester.. In terms of biological role, digests double-stranded RNA. Involved in the processing of primary rRNA transcript to yield the immediate precursors to the large and small rRNAs (23S and 16S). Processes some mRNAs, and tRNAs when they are encoded in the rRNA operon. Processes pre-crRNA and tracrRNA of type II CRISPR loci if present in the organism. This is Ribonuclease 3 from Enterobacter sp. (strain 638).